Reading from the N-terminus, the 187-residue chain is MKNNQNLIWIDLEMTGLEPEQDRIIEMATIVTDPQLNILAEGPVIAVSQPKILLDSMDAWNTKQHNQSGLVKRVLESNVSESQAEQLTIEFLKQYVDKGKSPMCGNSICQDRRFLYKYMPELAAYFHYRNLDVSSLKELVLRWRPELMNGVVKESKHLALDDIKDSINELIYYRQHFINLPEVKNDK.

The 164-residue stretch at 7-170 (LIWIDLEMTG…DDIKDSINEL (164 aa)) folds into the Exonuclease domain. Tyr128 is an active-site residue.

It belongs to the oligoribonuclease family.

The protein localises to the cytoplasm. Its function is as follows. 3'-to-5' exoribonuclease specific for small oligoribonucleotides. The sequence is that of Oligoribonuclease from Legionella pneumophila (strain Paris).